The primary structure comprises 374 residues: Alcohol dehydrogenase 1 (374 aa).

S1 bears the N-acetylserine mark. The Zn(2+) site is built by C46, H67, C97, C100, C103, C111, and C174. Residues 199–204 (GLGGVG), D223, K228, 292–294 (VGV), and R369 contribute to the NAD(+) site.

This sequence belongs to the zinc-containing alcohol dehydrogenase family. Class-I subfamily. Zn(2+) is required as a cofactor.

Its subcellular location is the cytoplasm. It catalyses the reaction a primary alcohol + NAD(+) = an aldehyde + NADH + H(+). The catalysed reaction is a secondary alcohol + NAD(+) = a ketone + NADH + H(+). The protein is Alcohol dehydrogenase 1 of Alligator mississippiensis (American alligator).